Here is a 209-residue protein sequence, read N- to C-terminus: Large ribosomal subunit protein uL4 (209 aa).

The tract at residues 44-77 (QRQGTHKSKERSEVSGSTRKLIRQKGGGGARRGD) is disordered.

The protein belongs to the universal ribosomal protein uL4 family. Part of the 50S ribosomal subunit.

Its function is as follows. One of the primary rRNA binding proteins, this protein initially binds near the 5'-end of the 23S rRNA. It is important during the early stages of 50S assembly. It makes multiple contacts with different domains of the 23S rRNA in the assembled 50S subunit and ribosome. Forms part of the polypeptide exit tunnel. In Parabacteroides distasonis (strain ATCC 8503 / DSM 20701 / CIP 104284 / JCM 5825 / NCTC 11152), this protein is Large ribosomal subunit protein uL4.